Reading from the N-terminus, the 450-residue chain is Phosphoglucosamine mutase (450 aa).

The active-site Phosphoserine intermediate is the Ser97. Ser97, Asp236, Asp238, and Asp240 together coordinate Mg(2+). A Phosphoserine modification is found at Ser97.

The protein belongs to the phosphohexose mutase family. The cofactor is Mg(2+). In terms of processing, activated by phosphorylation.

It carries out the reaction alpha-D-glucosamine 1-phosphate = D-glucosamine 6-phosphate. Catalyzes the conversion of glucosamine-6-phosphate to glucosamine-1-phosphate. The polypeptide is Phosphoglucosamine mutase (Prochlorococcus marinus (strain MIT 9312)).